Consider the following 1256-residue polypeptide: Bifunctional autolysin (1256 aa).

The signal sequence occupies residues 1-29 (MAKKFNYKLPSMVALTLVGSAVTAHQVQA). Polar residues predominate over residues 103 to 138 (GDTRANQSATTNNTQPVAKSTSTTAPKTNTNVTNAG). Disordered stretches follow at residues 103-151 (GDTR…NSEN), 172-219 (KTAA…KYKP), and 419-440 (TQST…PSTG). Low complexity-rich tracts occupy residues 172 to 196 (KTAA…KVTT) and 421 to 439 (STTT…KPST). An N-acetylmuramoyl-L-alanine amidase region spans residues 199–775 (ASAQPRSVAA…AVAQPKTAVK (577 aa)). GW domains lie at 443-517 (TVAA…YNTA), 519-593 (SPVN…DTAK), 612-686 (TVSS…YNNA), 688-762 (SPVN…VPAA), 784-859 (TTQT…VQNL), 861-936 (KEVK…APTA), and 943-1017 (AAKD…KELI). Residues 776–1256 (AYTVTKPQTT…GKYFDIPQYK (481 aa)) form an endo-beta-N-acetylglucosaminidase region.

The protein in the N-terminal section; belongs to the N-acetylmuramoyl-L-alanine amidase 2 family. It in the C-terminal section; belongs to the glycosyl hydrolase 73 family. Oligomer; forms a ring structure at the cell surface which is important for efficient partitioning of daughter cells after cell division. In terms of processing, undergoes proteolytic processing to generate the two extracellular lytic enzymes, probably at the septal region on the cell surface.

Its subcellular location is the secreted. The enzyme catalyses Hydrolyzes the link between N-acetylmuramoyl residues and L-amino acid residues in certain cell-wall glycopeptides.. It catalyses the reaction an N(4)-(oligosaccharide-(1-&gt;3)-[oligosaccharide-(1-&gt;6)]-beta-D-Man-(1-&gt;4)-beta-D-GlcNAc-(1-&gt;4)-alpha-D-GlcNAc)-L-asparaginyl-[protein] + H2O = an oligosaccharide-(1-&gt;3)-[oligosaccharide-(1-&gt;6)]-beta-D-Man-(1-&gt;4)-D-GlcNAc + N(4)-(N-acetyl-beta-D-glucosaminyl)-L-asparaginyl-[protein]. Endohydrolysis of the di-N-acetylchitobiosyl unit in high-mannose glycopeptides and glycoproteins containing the -[(Man)5(GlcNAc)2]-Asn structure. One N-acetyl-D-glucosamine residue remains attached to the protein; the rest of the oligosaccharide is released intact. Cleaves the peptidoglycan connecting the daughter cells at the end of the cell division cycle, resulting in the separation of the two newly divided cells. Acts as an autolysin in penicillin-induced lysis. The sequence is that of Bifunctional autolysin (atl) from Staphylococcus aureus (strain COL).